A 453-amino-acid polypeptide reads, in one-letter code: Chromosomal replication initiator protein DnaA (453 aa).

Residues 1-71 are domain I, interacts with DnaA modulators; sequence MSEKEIWEKV…QAILFDVVGY (71 aa). The segment at 71 to 114 is domain II; the sequence is YEVKPHFITTEELANYSNNETATPKETTKPSTETTEDNHVLGRE. A domain III, AAA+ region region spans residues 115 to 331; sequence QFNAHNTFDT…GALTRLLAYS (217 aa). 4 residues coordinate ATP: glycine 159, glycine 161, lysine 162, and threonine 163. A domain IV, binds dsDNA region spans residues 332–453; it reads QLLGKPITTE…ENLEKEIRNV (122 aa).

Belongs to the DnaA family. In terms of assembly, oligomerizes as a right-handed, spiral filament on DNA at oriC.

It localises to the cytoplasm. In terms of biological role, plays an essential role in the initiation and regulation of chromosomal replication. ATP-DnaA binds to the origin of replication (oriC) to initiate formation of the DNA replication initiation complex once per cell cycle. Binds the DnaA box (a 9 base pair repeat at the origin) and separates the double-stranded (ds)DNA. Forms a right-handed helical filament on oriC DNA; dsDNA binds to the exterior of the filament while single-stranded (ss)DNA is stabiized in the filament's interior. The ATP-DnaA-oriC complex binds and stabilizes one strand of the AT-rich DNA unwinding element (DUE), permitting loading of DNA polymerase. After initiation quickly degrades to an ADP-DnaA complex that is not apt for DNA replication. Binds acidic phospholipids. This Staphylococcus aureus (strain Mu3 / ATCC 700698) protein is Chromosomal replication initiator protein DnaA.